Consider the following 273-residue polypeptide: Torsin-1A (273 aa).

Residues 45-205 (KPKKPLTLSL…VSVFNNKNSG (161 aa)) are interaction with SNAPIN. Position 56 to 63 (56 to 63 (GWTGTGKN)) interacts with ATP. N-linked (GlcNAc...) asparagine glycosylation is found at Asn-97 and Asn-112.

It belongs to the ClpA/ClpB family. Torsin subfamily. Homohexamer. Interacts with TOR1B; the interaction may be specific of neural tissues. Interacts (ATP-bound) with TOR1AIP1 and TOR1AIP2; the interactions induce ATPase activity. Interacts with KLHL14; preferentially when ATP-free. Interacts with KLC1 (via TPR repeats); the interaction associates TOR1A with the kinesin oligomeric complex. Interacts with COPS4; the interaction associates TOR1A with the CSN complex. Interacts with SNAPIN; the interaction is direct and associates SNAPIN with the CSN complex. Interacts with STON2. Interacts (ATP-bound) with SYNE3 (via KASH domain); the interaction is required for SYNE3 nuclear envelope localization. Interacts with VIM; the interaction associates TOR1A with the cytoskeleton. Interacts with PLEC. Interacts (ATP-bound) with SLC6A3; regulates SLC6A3 transport to the plasma membrane. Post-translationally, N-glycosylated.

The protein resides in the endoplasmic reticulum lumen. The protein localises to the nucleus membrane. It localises to the cell projection. Its subcellular location is the growth cone. It is found in the cytoplasmic vesicle membrane. The protein resides in the synapse. The protein localises to the synaptosome. It localises to the cytoplasm. Its subcellular location is the cytoskeleton. It catalyses the reaction ATP + H2O = ADP + phosphate + H(+). Its function is as follows. Protein with chaperone functions important for the control of protein folding, processing, stability and localization as well as for the reduction of misfolded protein aggregates. Involved in the regulation of synaptic vesicle recycling, controls STON2 protein stability in collaboration with the COP9 signalosome complex (CSN). In the nucleus, may link the cytoskeleton with the nuclear envelope, this mechanism seems to be crucial for the control of nuclear polarity, cell movement and, specifically in neurons, nuclear envelope integrity. Participates in the cellular trafficking and may regulate the subcellular location of multipass membrane proteins such as the dopamine transporter SLC6A3, leading to the modulation of dopamine neurotransmission. In the endoplasmic reticulum, plays a role in the quality control of protein folding by increasing clearance of misfolded proteins such as SGCE variants or holding them in an intermediate state for proper refolding. May have a redundant function with TOR1B in non-neural tissues. The protein is Torsin-1A (TOR1A) of Cricetus cricetus (Black-bellied hamster).